The sequence spans 124 residues: Protein archease (124 aa).

Residues His7, Asp10, Asp123, and Thr124 each coordinate Ca(2+).

It belongs to the archease family.

Functionally, activates the tRNA-splicing ligase complex by facilitating the enzymatic turnover of catalytic subunit RtcB. Acts by promoting the guanylylation of RtcB, a key intermediate step in tRNA ligation. Can also alter the NTP specificity of RtcB such that ATP, dGTP or ITP is used efficiently. May also act as a chaperone or modulator of proteins involved in DNA or RNA processing. This Thermotoga maritima (strain ATCC 43589 / DSM 3109 / JCM 10099 / NBRC 100826 / MSB8) protein is Protein archease.